Here is a 201-residue protein sequence, read N- to C-terminus: MNPEYDYLFKLLLIGDSGVGKSCLLLRFADDTYTESYISTIGVDFKIRTIELDGKTIKLQIWDTAGQERGRTITSSYYRGAHGIIVVYDVTDQESYANVKQWLQEIDRYASENVNKLLVGNKSDLTTKKVVDNTTAKEFADSLGIPFLETSAKNATNVEQAFMTMAAEIKKRMGPGAASGGERPNLKIDSTPVKQAGGGCC.

Position 1 is an N-acetylmethionine (Met-1). GTP-binding residues include Ser-17, Gly-18, Val-19, Gly-20, Lys-21, Ser-22, Cys-23, Tyr-33, Thr-34, Glu-35, Ser-36, Ser-39, and Thr-40. A Mg(2+)-binding site is contributed by Ser-22. Residues Asp-30–Phe-45 carry the Switch 1 motif. Mg(2+) is bound by residues Thr-40 and Asp-63. Residues Thr-64–Gly-83 form a switch 2 region; required for interaction with REP1/CHM region. The Switch 2 motif lies at Ala-65–Gly-80. Residues Gly-66, Asn-121, Lys-122, Asp-124, Ser-151, Ala-152, and Lys-153 each contribute to the GTP site. The segment at Met-173–Cys-201 is disordered. S-geranylgeranyl cysteine attachment occurs at residues Cys-200 and Cys-201. At Cys-201 the chain carries Cysteine methyl ester.

The protein belongs to the small GTPase superfamily. Rab family. As to quaternary structure, interacts with MICAL1 and MICAL2. Interacts (in GTP-bound form) with MICALCL, MICAL1 and MILCAL3. Interacts with GDI1; the interaction requires the GDP-bound state. Interacts with CHM/REP1; the interaction requires the GDP-bound form and is necessary for prenylation by GGTase II. Interacts with RabGAP TBC1D20. Interacts (in GDP-bound form) with lipid phosphatase MTMR6 (via GRAM domain); the interaction regulates MTMR6 recruitment to the endoplasmic reticulum-Golgi intermediate compartment. Interacts (in GDP-bound form) with lipid phosphatase MTMR7. Mg(2+) serves as cofactor. Post-translationally, prenylated; by GGTase II, only after interaction of the substrate with Rab escort protein 1 (REP1).

The protein localises to the cytoplasm. Its subcellular location is the membrane. The protein resides in the preautophagosomal structure membrane. It is found in the perinuclear region. It catalyses the reaction GTP + H2O = GDP + phosphate + H(+). With respect to regulation, regulated by guanine nucleotide exchange factors (GEFs) which promote the exchange of bound GDP for free GTP. Regulated by GTPase activating proteins (GAPs) including TBC1D20 which increases the GTP hydrolysis activity. Inhibited by GDP dissociation inhibitors (GDIs). Its function is as follows. The small GTPases Rab are key regulators of intracellular membrane trafficking, from the formation of transport vesicles to their fusion with membranes. Rabs cycle between an inactive GDP-bound form and an active GTP-bound form that is able to recruit to membranes different set of downstream effectors directly responsible for vesicle formation, movement, tethering and fusion. Plays a role in the initial events of the autophagic vacuole development which take place at specialized regions of the endoplasmic reticulum. Regulates vesicular transport between the endoplasmic reticulum and successive Golgi compartments. Required to modulate the compacted morphology of the Golgi. Promotes the recruitment of lipid phosphatase MTMR6 to the endoplasmic reticulum-Golgi intermediate compartment. The sequence is that of Ras-related protein Rab-1B (RAB1B) from Sus scrofa (Pig).